The following is a 243-amino-acid chain: MKLLSITLTSIVISMVFYQTPITTEARSLRKTNDQDHFKAGFTDDFVPTSPGNSPGVGHKKGNVNVEGFQDDFKPTEGRKLLKTNVQDHFKTGSTDDFAPTSPGHSPGVGHKKGNVNVESSEDDFKHKEGRKLQQTNGQNHFKTGSTDDFAPTSPGNSPGIGHKKGHANVKGFKDDFAPTEEIRLQKMNGQDHFKTGSTDDFAPTTPGNSPGMGHKKGDDFKPTTPGHSPGVGHAVKNDEPKA.

The first 26 residues, 1–26 (MKLLSITLTSIVISMVFYQTPITTEA), serve as a signal peptide directing secretion. Positions 28 to 44 (SLRKTNDQDHFKAGFTD) are excised as a propeptide. 3 disordered regions span residues 42–63 (FTDD…KKGN), 91–173 (KTGS…VKGF), and 189–243 (NGQD…EPKA). At P48 the chain carries Hydroxyproline; partial. Hydroxyproline is present on P51. Residue P55 is modified to Hydroxyproline; partial. Residues 60–96 (KKGNVNVEGFQDDFKPTEGRKLLKTNVQDHFKTGSTD) constitute a propeptide that is removed on maturation. Residues P100, P103, and P107 each carry the hydroxyproline modification. A propeptide spanning residues 112 to 148 (KKGNVNVESSEDDFKHKEGRKLQQTNGQNHFKTGSTD) is cleaved from the precursor. A compositionally biased stretch (polar residues) spans 133–147 (LQQTNGQNHFKTGST). A hydroxyproline mark is found at P152, P155, and P159. Residues 164–200 (KKGHANVKGFKDDFAPTEEIRLQKMNGQDHFKTGSTD) constitute a propeptide that is removed on maturation. Residues P204, P207, and P211 each carry the hydroxyproline modification. The propeptide occupies 216-219 (KKGD). 3 positions are modified to hydroxyproline: P223, P226, and P230. Positions 235 to 243 (AVKNDEPKA) are excised as a propeptide.

The protein belongs to the C-terminally encoded plant signaling peptide (CEP) family. As to quaternary structure, interacts with CEP receptors (e.g. CEPR1 and CEPR2). In terms of processing, hydroxylated peptide is more active than non-hydroxylated peptide. Post-translationally, the mature small signaling peptide is generated by proteolytic processing of the longer precursor. Expressed in lateral root primordia and in lateral roots excluding the meristem region. Also present in the aerial tissues, such as leaf petioles and the shoot apex region.

It localises to the secreted. The protein resides in the extracellular space. Its subcellular location is the apoplast. Extracellular signaling peptide that represses primary root growth rate and significantly inhibits lateral root formation. Modulates leaf morphology. Regulates systemic nitrogen (N)-demand signaling. Mediates up-regulation of genes involved in N uptake and assimilation pathways. In Arabidopsis thaliana (Mouse-ear cress), this protein is Precursor of CEP9.